A 439-amino-acid polypeptide reads, in one-letter code: Ribosomal protein uS12 methylthiotransferase RimO (439 aa).

Residues 2-114 (SKLYLMSLGC…IDEMILKKTN (113 aa)) form the MTTase N-terminal domain. 6 residues coordinate [4Fe-4S] cluster: C11, C45, C77, C146, C150, and C153. Residues 132-363 (TGSNSHAFIK…VDEVIEKSFE (232 aa)) enclose the Radical SAM core domain.

This sequence belongs to the methylthiotransferase family. RimO subfamily. The cofactor is [4Fe-4S] cluster.

It is found in the cytoplasm. It carries out the reaction L-aspartate(89)-[ribosomal protein uS12]-hydrogen + (sulfur carrier)-SH + AH2 + 2 S-adenosyl-L-methionine = 3-methylsulfanyl-L-aspartate(89)-[ribosomal protein uS12]-hydrogen + (sulfur carrier)-H + 5'-deoxyadenosine + L-methionine + A + S-adenosyl-L-homocysteine + 2 H(+). Catalyzes the methylthiolation of an aspartic acid residue of ribosomal protein uS12. The chain is Ribosomal protein uS12 methylthiotransferase RimO from Campylobacter jejuni subsp. jejuni serotype O:23/36 (strain 81-176).